The primary structure comprises 543 residues: Secreted effector protein SptP (543 aa).

Residues 35 to 139 (TDKAYVAPEK…FINLIKNKDN (105 aa)) form a chaperone-binding region. Residues 162-293 (DVGAESKQPL…TAELEKIKAG (132 aa)) enclose the Bacterial Rho-GAP domain. Residues 315 to 543 (IPINQQTQVK…QAQLLMTTAS (229 aa)) enclose the Tyrosine-protein phosphatase domain. Residue Cys-481 is the Phosphocysteine intermediate of the active site.

Forms a complex with SicP.

Its subcellular location is the secreted. The protein resides in the host cytoplasm. The enzyme catalyses O-phospho-L-tyrosyl-[protein] + H2O = L-tyrosyl-[protein] + phosphate. Functionally, effector proteins function to alter host cell physiology and promote bacterial survival in host tissues. This protein includes tyrosine phosphatase and GTPase activating protein (GAP) activities. After bacterial internalization, GAP mediates the reversal of the cytoskeletal changes induced by SopE. This function is independent of its tyrosine phosphatase activity, which remains unclear. This is Secreted effector protein SptP (sptP) from Salmonella typhi.